A 146-amino-acid polypeptide reads, in one-letter code: 3-dehydroquinate dehydratase (146 aa).

The Proton acceptor role is filled by Tyr23. Positions 75, 81, and 88 each coordinate substrate. His101 (proton donor) is an active-site residue. Substrate is bound by residues 102 to 103 and Arg112; that span reads LS.

This sequence belongs to the type-II 3-dehydroquinase family. Homododecamer.

It carries out the reaction 3-dehydroquinate = 3-dehydroshikimate + H2O. It participates in metabolic intermediate biosynthesis; chorismate biosynthesis; chorismate from D-erythrose 4-phosphate and phosphoenolpyruvate: step 3/7. In terms of biological role, catalyzes a trans-dehydration via an enolate intermediate. This Saccharophagus degradans (strain 2-40 / ATCC 43961 / DSM 17024) protein is 3-dehydroquinate dehydratase.